A 205-amino-acid chain; its full sequence is GTP cyclohydrolase-2 (205 aa).

49–53 (RLHSE) is a GTP binding site. 3 residues coordinate Zn(2+): Cys-54, Cys-65, and Cys-67. Residues Gln-70, 92-94 (EGR), and Thr-114 contribute to the GTP site. Asp-126 functions as the Proton acceptor in the catalytic mechanism. Catalysis depends on Arg-128, which acts as the Nucleophile. Positions 149 and 154 each coordinate GTP.

It belongs to the GTP cyclohydrolase II family. Zn(2+) is required as a cofactor.

The catalysed reaction is GTP + 4 H2O = 2,5-diamino-6-hydroxy-4-(5-phosphoribosylamino)-pyrimidine + formate + 2 phosphate + 3 H(+). The protein operates within cofactor biosynthesis; riboflavin biosynthesis; 5-amino-6-(D-ribitylamino)uracil from GTP: step 1/4. Catalyzes the conversion of GTP to 2,5-diamino-6-ribosylamino-4(3H)-pyrimidinone 5'-phosphate (DARP), formate and pyrophosphate. In Pseudomonas putida (strain ATCC 700007 / DSM 6899 / JCM 31910 / BCRC 17059 / LMG 24140 / F1), this protein is GTP cyclohydrolase-2.